Here is a 793-residue protein sequence, read N- to C-terminus: MASISDSETTNHGSIWDLDQNLDQPMDEEASRLKNMYTEKKFSSILLLRLAFQSLGVVFGDLGTSPLYVFYNIFPHGVDDDEDVIGALSLIIYTLTLIPLMKYVFVVLRANDNGQGGTFALYSLLCRHAKVSTIPNQHKTDEELTTYSRQTYEENSLAAKIKRWLEGHVYKKNCLLILVLIGTCTAIGDGILTPAISVLSASGGIRVQNQKMSTDVVVVVAVIILIGLFSMQHYGTDKVGWLFAPIVLLWFILIGTIGALNIHKYNSSVLKAYNPVYIYRYFRRGKSESWTSLGGIMLSITGTEALYADLCHFPVLAIQIAFTLVVFPCLLLAYTGQAAYIISNKDHVVDAFYRSIPDTIYWPVFIIATLAAIVASQATISATYSIIKQALALGCFPRVSVVHTSKKFLGQIYIPDINWVLMILCIAVTAGFKNQSQIGNAYGTAVVIVMLVTTFLMVPIMLLVWKSHWILVVIFIVLSLMVELPYFTACINKVDQGGWVPLVVATTCFIIMYVWHFCTVKRYEFEMHSKVSMAWILGLGPSLGLVRVPGIGFVYTELASGVPHIFSHFITNLPAIHSVVVFVCVKYLPVYTVPTEERFIVKRIGPKNFHMFRCVARYGYKDIHKRDDDFEKMLLDRLLLFVRLESMMDDYSDSEDFTMMEEKTQGSSNALLLTGKAGSNTMCSTGDLSYSSQDSIVPAKSPIRGNSLTRYSSQTFGDELEFLNLEFLNRCKDAGVVHILGNTVVHARPDSGIIKKVAVNYVFAFLRKICRENSVIFNVPHESLLNVGQIYYI.

Over 1–54 the chain is Cytoplasmic; that stretch reads MASISDSETTNHGSIWDLDQNLDQPMDEEASRLKNMYTEKKFSSILLLRLAFQS. The helical transmembrane segment at 55–75 threads the bilayer; it reads LGVVFGDLGTSPLYVFYNIFP. Residues 76–87 are Extracellular-facing; the sequence is HGVDDDEDVIGA. The helical transmembrane segment at 88-108 threads the bilayer; that stretch reads LSLIIYTLTLIPLMKYVFVVL. Over 109-175 the chain is Cytoplasmic; sequence RANDNGQGGT…EGHVYKKNCL (67 aa). A helical membrane pass occupies residues 176–196; that stretch reads LILVLIGTCTAIGDGILTPAI. Topologically, residues 197 to 215 are extracellular; the sequence is SVLSASGGIRVQNQKMSTD. The helical transmembrane segment at 216–236 threads the bilayer; that stretch reads VVVVVAVIILIGLFSMQHYGT. At 237 to 238 the chain is on the cytoplasmic side; it reads DK. The chain crosses the membrane as a helical span at residues 239 to 259; sequence VGWLFAPIVLLWFILIGTIGA. Residues 260-289 are Extracellular-facing; sequence LNIHKYNSSVLKAYNPVYIYRYFRRGKSES. The N-linked (GlcNAc...) asparagine glycan is linked to Asn266. Residues 290-310 traverse the membrane as a helical segment; the sequence is WTSLGGIMLSITGTEALYADL. Topologically, residues 311–315 are cytoplasmic; it reads CHFPV. Residues 316–338 traverse the membrane as a helical segment; the sequence is LAIQIAFTLVVFPCLLLAYTGQA. Over 339-359 the chain is Extracellular; sequence AYIISNKDHVVDAFYRSIPDT. Residues 360 to 380 traverse the membrane as a helical segment; it reads IYWPVFIIATLAAIVASQATI. The Cytoplasmic portion of the chain corresponds to 381-411; the sequence is SATYSIIKQALALGCFPRVSVVHTSKKFLGQ. A helical transmembrane segment spans residues 412–432; it reads IYIPDINWVLMILCIAVTAGF. The Extracellular segment spans residues 433 to 444; it reads KNQSQIGNAYGT. Asn434 is a glycosylation site (N-linked (GlcNAc...) asparagine). A helical membrane pass occupies residues 445-465; that stretch reads AVVIVMLVTTFLMVPIMLLVW. Over 466–468 the chain is Cytoplasmic; the sequence is KSH. The helical transmembrane segment at 469 to 489 threads the bilayer; it reads WILVVIFIVLSLMVELPYFTA. Topologically, residues 490-496 are extracellular; that stretch reads CINKVDQ. A helical transmembrane segment spans residues 497 to 517; that stretch reads GGWVPLVVATTCFIIMYVWHF. Residues 518–793 lie on the Cytoplasmic side of the membrane; the sequence is CTVKRYEFEM…LLNVGQIYYI (276 aa).

The protein belongs to the HAK/KUP transporter (TC 2.A.72.3) family.

Its subcellular location is the membrane. Functionally, high-affinity potassium transporter. The chain is Putative potassium transporter 12 (HAK12) from Oryza sativa subsp. japonica (Rice).